Consider the following 88-residue polypeptide: LYR motif-containing protein 2 (88 aa).

The N-terminal 19 residues, methionine 1 to arginine 19, are a transit peptide targeting the mitochondrion.

The protein belongs to the complex I LYR family.

Its subcellular location is the mitochondrion. Functionally, involved in efficient integration of the N-module into mitochondrial respiratory chain complex I. The chain is LYR motif-containing protein 2 (LYRM2) from Homo sapiens (Human).